The chain runs to 273 residues: Phycobilisome 32.1 kDa linker polypeptide, phycocyanin-associated, rod 2 (273 aa).

In terms of domain architecture, PBS-linker spans 1–180; that stretch reads MTSLVSAQRL…VYRGYATSDR (180 aa). A CpcD-like domain is found at 220 to 273; the sequence is NQMYRLQVIQGAAPGRGTRVRRGKAEYLVSYDNLSAKLQQINRQGDTVTMISLA.

This sequence belongs to the phycobilisome linker protein family. As to quaternary structure, part of 2 PBS rod complexes, the conventional CpcG-PBS rod and a photosystem I-specific CpcL-PBS rod, both of which include ferredoxin--NADP reductase (petH). CpcG-PBS has on average 3 stacked phycocyanin hexamers (PC, CpcA and CpcB). Linker CpcG connects the PC stack to the thylakoid, the hexamers are linked by 1 copy of CpcC1, 1 copy of CpcC2 and the stack is terminated by a single copy of CpcD. The CpcL-PBS has on average 5 stacked phycocyanin hexamers (PC, CpcA and CpcB). Linker CpcL connects the PC stack to the thylakoid, the hexamers are linked by 1 copy of CpcC1, 3 copies of CpcC2 and the stack is terminated by a single copy of CpcD. Interacts with the C-phycocyanin (PC) beta subunit (cpcB), it may fit into the center of the PC hexamer.

The protein resides in the cellular thylakoid membrane. In terms of biological role, rod linker protein, associated with phycocyanin. Linker polypeptides determine the state of aggregation and the location of the disk-shaped phycobiliprotein units within the phycobilisome and modulate their spectroscopic properties in order to mediate a directed and optimal energy transfer. This is Phycobilisome 32.1 kDa linker polypeptide, phycocyanin-associated, rod 2 (cpcC2) from Synechocystis sp. (strain ATCC 27184 / PCC 6803 / Kazusa).